The chain runs to 219 residues: Claudin-6 (219 aa).

The Cytoplasmic segment spans residues 1–7 (MASTGLQ). Residues 8 to 28 (ILGIVLTLLGWVNALVSCALP) traverse the membrane as a helical segment. At 29–81 (MWKVTAFIGNSIVVAQMVWEGLWMSCVVQSTGQMQCKVYDSLLALPQDLQAAR) the chain is on the extracellular side. A helical transmembrane segment spans residues 82–102 (ALCVVTLLIVLLGLLVYLAGA). Topologically, residues 103–116 (KCTTCVEDRNSKSR) are cytoplasmic. The helical transmembrane segment at 117–137 (LVLISGIIFVISGVLTLIPVC) threads the bilayer. Over 138–163 (WTAHSIIQDFYNPLVADAQKRELGAS) the chain is Extracellular. A helical membrane pass occupies residues 164 to 184 (LYLGWAASGLLLLGGGLLCCA). At 185–219 (CSSGGTQGPRHYMACYSTSVPHSRGPSEYPTKNYV) the chain is on the cytoplasmic side. Phosphoserine occurs at positions 201, 203, 207, and 211. The interactions with TJP1, TJP2 and TJP3 stretch occupies residues 218–219 (YV).

It belongs to the claudin family. As to quaternary structure, directly interacts with TJP1/ZO-1, TJP2/ZO-2 and TJP3/ZO-3. Interacts with CLDN1, CD81 and OCLN. Expressed mostly in embryonic tissues.

The protein resides in the cell junction. It is found in the tight junction. The protein localises to the cell membrane. Its function is as follows. Plays a major role in tight junction-specific obliteration of the intercellular space, through calcium-independent cell-adhesion activity. The protein is Claudin-6 (Cldn6) of Mus musculus (Mouse).